We begin with the raw amino-acid sequence, 560 residues long: Solute carrier family 22 member 6 (560 aa).

Topologically, residues 1 to 15 are cytoplasmic; sequence MAFSDLLEQVGSTGR. The helical transmembrane segment at 16–36 threads the bilayer; that stretch reads FQVLHVTLLSMPILMMASHNL. Topologically, residues 37 to 143 are extracellular; it reads LQNFVAAVPP…LVCDYRALKQ (107 aa). Residues 144–164 form a helical membrane-spanning segment; sequence MSQTTYMGGVLVGAIVFGGLS. The Cytoplasmic segment spans residues 165–170; sequence DRFGRR. Residues 171–191 form a helical membrane-spanning segment; the sequence is VLLLISNLMMAIGGTCVAFST. Topologically, residues 192–201 are extracellular; the sequence is SFTMFCVFRV. A helical membrane pass occupies residues 202 to 222; that stretch reads CCGMALSGLVLNSFSLIVEWI. Topologically, residues 223–228 are cytoplasmic; that stretch reads PTRVRT. The helical transmembrane segment at 229 to 249 threads the bilayer; it reads VVGTGTGYCYTTGQLILAAVA. Residues 250-256 are Extracellular-facing; that stretch reads YCIRDWR. Residues 257 to 277 form a helical membrane-spanning segment; it reads WLTLAVSLPFYVSFLYSWWFL. Topologically, residues 278 to 345 are cytoplasmic; that stretch reads ESARWLVLTK…DLLRTSTMRT (68 aa). Residues 346-366 form a helical membrane-spanning segment; that stretch reads ITICLSAVWFSTSFAYYGLSM. Residues 367–374 are Extracellular-facing; it reads DLQKFGVS. The helical transmembrane segment at 375–395 threads the bilayer; it reads IYLIQIIFGAVDIPAKIIVTI. Over 396–406 the chain is Cytoplasmic; the sequence is CMSMLGRRPSQ. A helical membrane pass occupies residues 407–427; the sequence is CGALVLAGIMILINLLVPSDL. Residues 428–433 lie on the Extracellular side of the membrane; the sequence is QMLRTS. The chain crosses the membrane as a helical span at residues 434 to 454; it reads LAVIGKGCLAASFNCCYLYAG. Residues 455–465 lie on the Cytoplasmic side of the membrane; that stretch reads ELYPTVIRQSG. The helical transmembrane segment at 466–486 threads the bilayer; the sequence is MGWVSMMARFGAMVAPMVLLL. At 487 to 491 the chain is on the extracellular side; that stretch reads GDDYP. A helical transmembrane segment spans residues 492 to 512; that stretch reads WIPGFIYGGAPIVSGIFAFFL. At 513-560 the chain is on the cytoplasmic side; that stretch reads PETLSQPLPDTIQDIDDRGLARTNSKRLPEKLDLAMKDPSCVLLKESV.

Belongs to the major facilitator (TC 2.A.1) superfamily. Organic cation transporter (TC 2.A.1.19) family. Glycosylated. Glycosylation is necessary for proper targeting of the transporter to the plasma membrane.

The protein resides in the cell membrane. Its subcellular location is the basolateral cell membrane. It localises to the basal cell membrane. Involved in the renal elimination of endogenous and exogenous organic anions. Functions as organic anion exchanger when the uptake of one molecule of organic anion is coupled with an efflux of one molecule of endogenous dicarboxylic acid (glutarate, ketoglutarate, etc). Mediates the sodium-independent uptake of p-aminohippurate (PAH), 2,3-dimercapto-1-propanesulfonic acid (DMPS), cidofovir, adefovir, 9-(2-phosphonylmethoxyethyl) guanine (PMEG), 9-(2-phosphonylmethoxyethyl) diaminopurine (PMEDAP), ochratoxin (OTA), acyclovir (ACV), 3'-azido-3-'deoxythymidine (AZT), cimetidine (CMD), 2,4-dichloro-phenoxyacetate (2,4-D), hippurate (HA), indoleacetate (IA), indoxyl sulfate (IS) and 3-carboxy-4-methyl-5-propyl-2-furanpropionate (CMPF) and edaravone sulfate. PAH uptake is inhibited by p-chloromercuribenzenesulphonate (PCMBS), diethyl pyrocarbonate (DEPC), indomethacin, sulindac, diclofenac, carprofen, okadaic acid, benzothiazolylcysteine (BTC), S-chlorotrifluoroethylcysteine (CTFC), cysteine S-conjugates S-dichlorovinylcysteine (DCVC), furosemide, steviol, phorbol 12-myristate 13-acetate (PMA), calcium ionophore A23187, benzylpenicillin, bumetamide, losartan, probenecid, phenol red, urate, glutarate and alpha-ketoglutarate. The sequence is that of Solute carrier family 22 member 6 (slc22a6) from Danio rerio (Zebrafish).